A 303-amino-acid chain; its full sequence is Methionine import ATP-binding protein MetN (303 aa).

Positions 1–222 (MLDQISLEIP…PDPKMRHFLG (222 aa)) constitute an ABC transporter domain. Position 19–26 (19–26 (GHSGAGKS)) interacts with ATP.

Belongs to the ABC transporter superfamily. Methionine importer (TC 3.A.1.24) family. In terms of assembly, the complex is composed of two ATP-binding proteins (MetN), two transmembrane proteins (MetI) and a solute-binding protein (MetQ).

Its subcellular location is the cell inner membrane. It carries out the reaction L-methionine(out) + ATP + H2O = L-methionine(in) + ADP + phosphate + H(+). The enzyme catalyses D-methionine(out) + ATP + H2O = D-methionine(in) + ADP + phosphate + H(+). Its function is as follows. Part of the ABC transporter complex MetNIQ involved in methionine import. Responsible for energy coupling to the transport system. The protein is Methionine import ATP-binding protein MetN of Wolinella succinogenes (strain ATCC 29543 / DSM 1740 / CCUG 13145 / JCM 31913 / LMG 7466 / NCTC 11488 / FDC 602W) (Vibrio succinogenes).